The primary structure comprises 583 residues: Putative amidase C869.01 (583 aa).

Residues methionine 1–alanine 19 form the signal peptide. Active-site charge relay system residues include lysine 141 and serine 222. The active-site Acyl-ester intermediate is serine 246.

This sequence belongs to the amidase family.

The protein localises to the cytoplasm. It catalyses the reaction a monocarboxylic acid amide + H2O = a monocarboxylate + NH4(+). This chain is Putative amidase C869.01, found in Schizosaccharomyces pombe (strain 972 / ATCC 24843) (Fission yeast).